The primary structure comprises 96 residues: C-C motif chemokine 20 (96 aa).

Positions 1–26 (MCCTKSLLLAALMSVLLLHLCGESEA) are cleaved as a signal peptide. Disulfide bonds link Cys32–Cys58 and Cys33–Cys74.

The protein belongs to the intercrine beta (chemokine CC) family. C-terminal processed forms which lack 1, 3 or 6 amino acids are produced by proteolytic cleavage after secretion from peripheral blood monocytes. Expressed in the seminal plasma, endometrial fluid and follicular fluid (at protein level). Expressed predominantly in the liver, lymph nodes, appendix, peripheral blood lymphocytes, and fetal lung. Low levels seen in thymus, prostate, testis, small intestine and colon.

The protein localises to the secreted. Functionally, acts as a ligand for C-C chemokine receptor CCR6. Signals through binding and activation of CCR6 and induces a strong chemotactic response and mobilization of intracellular calcium ions. The ligand-receptor pair CCL20-CCR6 is responsible for the chemotaxis of dendritic cells (DC), effector/memory T-cells and B-cells and plays an important role at skin and mucosal surfaces under homeostatic and inflammatory conditions, as well as in pathology, including cancer and various autoimmune diseases. CCL20 acts as a chemotactic factor that attracts lymphocytes and, slightly, neutrophils, but not monocytes. Involved in the recruitment of both the pro-inflammatory IL17 producing helper T-cells (Th17) and the regulatory T-cells (Treg) to sites of inflammation. Required for optimal migration of thymic natural regulatory T cells (nTregs) and DN1 early thymocyte progenitor cells. C-terminal processed forms have been shown to be equally chemotactically active for leukocytes. Positively regulates sperm motility and chemotaxis via its binding to CCR6 which triggers Ca2+ mobilization in the sperm which is important for its motility. Inhibits proliferation of myeloid progenitors in colony formation assays. May be involved in formation and function of the mucosal lymphoid tissues by attracting lymphocytes and dendritic cells towards epithelial cells. Possesses antibacterial activity towards E.coli ATCC 25922 and S.aureus ATCC 29213. The polypeptide is C-C motif chemokine 20 (CCL20) (Homo sapiens (Human)).